The following is a 747-amino-acid chain: Kinesin-like protein KIF3B (747 aa).

N-acetylmethionine is present on methionine 1. The residue at position 2 (serine 2) is an N-acetylserine; in Kinesin-like protein KIF3B, N-terminally processed. Residues 9–340 (SVRVVVRCRP…LRYANRAKNI (332 aa)) form the Kinesin motor domain. Residue 96 to 103 (GQTGTGKT) coordinates ATP. Residues 346-579 (VNEDPKDALL…EQTQNELTRE (234 aa)) are a coiled coil. 2 disordered regions span residues 374–412 (IGRRKRREKRREGGGSGGGGEEEEEEGEEGEEDGDDKDD) and 698–747 (IQVD…LVPK). Positions 393 to 411 (GEEEEEEGEEGEEDGDDKD) are enriched in acidic residues. Residues 580–747 (LKLKHLIIEN…YPQSRGLVPK (168 aa)) form a globular region. A compositionally biased stretch (polar residues) spans 701–710 (DASSFESTAS). Positions 711-721 (RKPKARPKSGR) are enriched in basic residues. A compositionally biased stretch (low complexity) spans 722-735 (KSGSSSSSSGNPAS).

This sequence belongs to the TRAFAC class myosin-kinesin ATPase superfamily. Kinesin family. Kinesin II subfamily. Heterodimer of KIF3A and KIF3B. KIF3A/KIF3B heterodimer interacts with KIFAP3 forming a heterotrimeric (KIF3A/KIF3B/KIFAP3) complex. Interacts with the SMC3 subunit of the cohesin complex. Interacts directly with IFT20. Interacts with FLCN.

The protein resides in the cytoplasm. Its subcellular location is the cytoskeleton. It is found in the cell projection. The protein localises to the cilium. It localises to the dendritic spine. Its function is as follows. Microtubule-based molecular motor that transport intracellular cargos, such as vesicles, organelles and protein complexes. Uses ATP hydrolysis to generate force to bind and move along the microtubule. Plays a role in cilia formation. Involved in photoreceptor integrity and opsin trafficking in rod photoreceptors. Transports vesicles containing N-methyl-D-aspartate (NMDA) receptor subunit GRIN2A into neuronal dendrites. This Mus musculus (Mouse) protein is Kinesin-like protein KIF3B.